Here is a 601-residue protein sequence, read N- to C-terminus: HIRA-interacting protein 3 (601 aa).

Disordered stretches follow at residues 60–469 (KMQA…EDHP) and 546–601 (STGR…GDSS). Basic and acidic residues predominate over residues 66-76 (GTREGKPDFIK). Phosphoserine is present on residues Ser85, Ser96, and Ser98. The segment covering 97-113 (ESESSSSPSSPDGSGPS) has biased composition (low complexity). A compositionally biased stretch (basic residues) spans 117–129 (RTTKKTCLRRALK). The span at 130 to 149 (KAVESTDEDHQTDLDAKMGL) shows a compositional bias: basic and acidic residues. Ser134 is modified (phosphoserine). 2 positions are modified to phosphothreonine: Thr135 and Thr141. Phosphoserine is present on residues Ser152, Ser153, and Ser163. At Thr167 the chain carries Phosphothreonine. Positions 186–205 (GAKDKQVPLKADRKQVREES) are enriched in basic and acidic residues. 11 positions are modified to phosphoserine: Ser205, Ser207, Ser208, Ser231, Ser234, Ser238, Ser313, Ser359, Ser360, Ser384, and Ser389. Basic and acidic residues-rich tracts occupy residues 238–264 (SPAK…ERKS) and 313–324 (SSEKGEAEKEEG). The segment covering 347–378 (RTQTESGRRQNTSSRDDSNSTQEQAAAQGTTK) has biased composition (polar residues). Positions 379–388 (SGSLGSSNGD) are enriched in low complexity. A Phosphothreonine modification is found at Thr391. Phosphoserine is present on residues Ser396 and Ser398. Residues 413–432 (SNKSSKNGQARSCSSSSDSS) show a composition bias toward low complexity. The interaction with the histone H2A-H2B complex stretch occupies residues 429–572 (SDSSPEPTGQ…TSPGETYRRT (144 aa)). Residues 556–566 (WNPSGEGTSPG) are compositionally biased toward polar residues. Ser564, Ser575, Ser595, Ser596, and Ser600 each carry phosphoserine. Over residues 568–580 (TYRRTLDSEEEQP) the composition is skewed to basic and acidic residues.

In terms of assembly, interacts (via C-terminus) with histone H2A-H2B dimers; the interaction is direct. Interacts with HIRA. Interacts with CK2. Phosphorylated by CK2.

Its subcellular location is the nucleus. Its function is as follows. Histone chaperone that carries a H2A-H2B histone complex and facilitates its deposition onto chromatin. The sequence is that of HIRA-interacting protein 3 from Mus musculus (Mouse).